The following is a 314-amino-acid chain: Protein translocase subunit SecF (314 aa).

6 helical membrane-spanning segments follow: residues 17 to 37 (AVAVSAILVAIALISMGTRGL), 137 to 157 (QGTYAILYALLAIVAYIWWRY), 158 to 178 (ELNFGVAAVIALVHDVVITLG), 188 to 210 (SLPVLAAILTVIGYSLNDTIVVF), 250 to 270 (TLIVVAVLYFFGGEVINGFAF), and 272 to 292 (LLVGIIVGTYSSIFVASLLLV).

It belongs to the SecD/SecF family. SecF subfamily. As to quaternary structure, forms a complex with SecD. Part of the essential Sec protein translocation apparatus which comprises SecA, SecYEG and auxiliary proteins SecDF. Other proteins may also be involved.

It is found in the cell inner membrane. Part of the Sec protein translocase complex. Interacts with the SecYEG preprotein conducting channel. SecDF uses the proton motive force (PMF) to complete protein translocation after the ATP-dependent function of SecA. This Desulfurispirillum indicum (strain ATCC BAA-1389 / DSM 22839 / S5) protein is Protein translocase subunit SecF.